The following is a 462-amino-acid chain: UDP-N-acetylmuramate--L-alanine ligase (462 aa).

116–122 (GAHGKTT) contacts ATP.

It belongs to the MurCDEF family.

It localises to the cytoplasm. The catalysed reaction is UDP-N-acetyl-alpha-D-muramate + L-alanine + ATP = UDP-N-acetyl-alpha-D-muramoyl-L-alanine + ADP + phosphate + H(+). The protein operates within cell wall biogenesis; peptidoglycan biosynthesis. Cell wall formation. The sequence is that of UDP-N-acetylmuramate--L-alanine ligase from Desulforamulus reducens (strain ATCC BAA-1160 / DSM 100696 / MI-1) (Desulfotomaculum reducens).